The chain runs to 431 residues: Glutamate-1-semialdehyde 2,1-aminomutase (431 aa).

Lys269 carries the post-translational modification N6-(pyridoxal phosphate)lysine.

This sequence belongs to the class-III pyridoxal-phosphate-dependent aminotransferase family. HemL subfamily. As to quaternary structure, homodimer. It depends on pyridoxal 5'-phosphate as a cofactor.

The protein localises to the cytoplasm. It catalyses the reaction (S)-4-amino-5-oxopentanoate = 5-aminolevulinate. It functions in the pathway porphyrin-containing compound metabolism; protoporphyrin-IX biosynthesis; 5-aminolevulinate from L-glutamyl-tRNA(Glu): step 2/2. The polypeptide is Glutamate-1-semialdehyde 2,1-aminomutase (Francisella tularensis subsp. holarctica (strain LVS)).